The primary structure comprises 339 residues: MANDNRRTVTVYGATGAQGGAVARSLLKNHAFKVRAITRKPDSEAAKALRALGAEIVQGDGWSKEQMVAAFSGSWAAFVNTNSDDPCFVDGHPPTEVDLGKIIIDAIIEAGTVKHLVYSSFVDTSSFTNGQASIKAADMKAKVQRYAADSGHFDTVCPLYQGWYMGIFLRQDYARALGGFPYFQDEDGFRTLHLPRWGTHTDMPIPWISLEDDFGDIVHGIFLEPENYNRRVVPTVSDVCTYPEVMDAVHALATGQKAQYIPVTDWEAHFGDSHHGRESLTIFKFGHFTNGKYFGHEPISTDISAYLKSKAAEAQGKDPSDRKLITLSEWFEKHVAPLI.

NADP(+) is bound by residues 13-18 (GATGAQ), 39-43 (RKPDS), 60-61 (DG), 81-83 (TNS), K140, and 164-167 (YMGI).

It belongs to the NmrA-type oxidoreductase family.

NmrA-like family domain-containing oxidoreductase; part of the gene cluster that mediates the biosynthesis of notoamide, a fungal indole alkaloid that belongs to a family of natural products containing a characteristic bicyclo[2.2.2]diazaoctane core. The first step of notoamide biosynthesis involves coupling of L-proline and L-tryptophan by the bimodular NRPS notE, to produce cyclo-L-tryptophan-L-proline called brevianamide F. The reverse prenyltransferase notF then acts as a deoxybrevianamide E synthase and converts brevianamide F to deoxybrevianamide E via reverse prenylation at C-2 of the indole ring leading to the bicyclo[2.2.2]diazaoctane core. Deoxybrevianamide E is further hydroxylated at C-6 of the indole ring, likely catalyzed by the cytochrome P450 monooxygenase notG, to yield 6-hydroxy-deoxybrevianamide E. 6-hydroxy-deoxybrevianamide E is a specific substrate of the prenyltransferase notC for normal prenylation at C-7 to produce 6-hydroxy-7-prenyl-deoxybrevianamide, also called notoamide S. As the proposed pivotal branching point in notoamide biosynthesis, notoamide S can be diverted to notoamide E through an oxidative pyran ring closure putatively catalyzed by either notH cytochrome P450 monooxygenase or the notD FAD-linked oxidoreductase. This step would be followed by an indole 2,3-epoxidation-initiated pinacol-like rearrangement catalyzed by the notB FAD-dependent monooxygenase leading to the formation of notoamide C and notoamide D. On the other hand notoamide S is converted to notoamide T by notH (or notD), a bifunctional oxidase that also functions as the intramolecular Diels-Alderase responsible for generation of (+)-notoamide T. To generate antipodal (-)-notoaminide T, notH' (or notD') in Aspergillus versicolor is expected to catalyze a Diels-Alder reaction leading to the opposite stereochemistry. The remaining oxidoreductase notD (or notH) likely catalyzes the oxidative pyran ring formation to yield (+)-stephacidin A. The FAD-dependent monooxygenase notI is highly similar to notB and is predicted to catalyze a similar conversion from (+)-stephacidin A to (-)-notoamide B via the 2,3-epoxidation of (+)-stephacidin A followed by a pinacol-type rearrangement. Finally, it remains unclear which enzyme could be responsible for the final hydroxylation steps leading to notoamide A and sclerotiamide. In Aspergillus sp. (strain MF297-2), this protein is NmrA-like family domain-containing oxidoreductase notA.